Consider the following 392-residue polypeptide: ATP phosphoribosyltransferase regulatory subunit (392 aa).

This sequence belongs to the class-II aminoacyl-tRNA synthetase family. HisZ subfamily. Heteromultimer composed of HisG and HisZ subunits.

It localises to the cytoplasm. It participates in amino-acid biosynthesis; L-histidine biosynthesis; L-histidine from 5-phospho-alpha-D-ribose 1-diphosphate: step 1/9. Functionally, required for the first step of histidine biosynthesis. May allow the feedback regulation of ATP phosphoribosyltransferase activity by histidine. The protein is ATP phosphoribosyltransferase regulatory subunit of Marinomonas sp. (strain MWYL1).